Reading from the N-terminus, the 101-residue chain is MAKVSAVEKNKRREIMVKRYAARRARLKAIVMDQKISLEERFKASVQLAELPRNSAKVRVRNRCEVSGRPRAYYRKLKMSRIALRELGSVGHIPGIIKSSW.

This sequence belongs to the universal ribosomal protein uS14 family. Part of the 30S ribosomal subunit. Contacts proteins S3 and S10.

In terms of biological role, binds 16S rRNA, required for the assembly of 30S particles and may also be responsible for determining the conformation of the 16S rRNA at the A site. This Bartonella henselae (strain ATCC 49882 / DSM 28221 / CCUG 30454 / Houston 1) (Rochalimaea henselae) protein is Small ribosomal subunit protein uS14.